Here is a 180-residue protein sequence, read N- to C-terminus: Large ribosomal subunit protein uL5 (180 aa).

The protein belongs to the universal ribosomal protein uL5 family. In terms of assembly, part of the 50S ribosomal subunit; part of the 5S rRNA/L5/L18/L25 subcomplex. Contacts the 5S rRNA and the P site tRNA. Forms a bridge to the 30S subunit in the 70S ribosome.

Functionally, this is one of the proteins that bind and probably mediate the attachment of the 5S RNA into the large ribosomal subunit, where it forms part of the central protuberance. In the 70S ribosome it contacts protein S13 of the 30S subunit (bridge B1b), connecting the 2 subunits; this bridge is implicated in subunit movement. Contacts the P site tRNA; the 5S rRNA and some of its associated proteins might help stabilize positioning of ribosome-bound tRNAs. The chain is Large ribosomal subunit protein uL5 from Mycoplasma capricolum subsp. capricolum (strain California kid / ATCC 27343 / NCTC 10154).